Consider the following 150-residue polypeptide: 3-hydroxyacyl-[acyl-carrier-protein] dehydratase FabZ (150 aa).

The active site involves histidine 52.

This sequence belongs to the thioester dehydratase family. FabZ subfamily.

It localises to the cytoplasm. The enzyme catalyses a (3R)-hydroxyacyl-[ACP] = a (2E)-enoyl-[ACP] + H2O. In terms of biological role, involved in unsaturated fatty acids biosynthesis. Catalyzes the dehydration of short chain beta-hydroxyacyl-ACPs and long chain saturated and unsaturated beta-hydroxyacyl-ACPs. The protein is 3-hydroxyacyl-[acyl-carrier-protein] dehydratase FabZ of Cupriavidus metallidurans (strain ATCC 43123 / DSM 2839 / NBRC 102507 / CH34) (Ralstonia metallidurans).